We begin with the raw amino-acid sequence, 372 residues long: MFREKLRREIEIIKNNGLYRFLRKKDDGVLDFSSNDYLCLSKHPEVIEAVKEGLKYGAGSTGSRLTSGNINHQRLEEKIAEFKETERTLVYSSGYATNVGVISALCKKGDLILSDKLNHASIIDGCKLSKADVLIYNHCDVEHLTNLIEENWGKYNNLFIVTDGVFSMDGDIAPLRDLKKIADEFNAILIIDDAHGTGVLGDGRGTLKHFNLKPSDNIVQIGTLSKAIGGLGGFVCGIEEVVEYLINTSRSFIFSTALPPHVVEGCIKAFEIIEKTDIVKKLQKNIKIANKVFKKYEFIKEDNLTPIYPFIFKEKTMEIAEHLIKNNIFCVGIRYPTVPKGLERIRVSINVGHEKEDFELLCERIKEVYSSD.

Arginine 20 lines the substrate pocket. Position 94-95 (94-95) interacts with pyridoxal 5'-phosphate; that stretch reads GY. Histidine 119 lines the substrate pocket. Residues serine 167, 192 to 195, and 223 to 226 each bind pyridoxal 5'-phosphate; these read DDAH and TLSK. Lysine 226 carries the post-translational modification N6-(pyridoxal phosphate)lysine. Position 337 (threonine 337) interacts with substrate.

Belongs to the class-II pyridoxal-phosphate-dependent aminotransferase family. BioF subfamily. In terms of assembly, homodimer. It depends on pyridoxal 5'-phosphate as a cofactor.

It carries out the reaction 6-carboxyhexanoyl-[ACP] + L-alanine + H(+) = (8S)-8-amino-7-oxononanoate + holo-[ACP] + CO2. The protein operates within cofactor biosynthesis; biotin biosynthesis. In terms of biological role, catalyzes the decarboxylative condensation of pimeloyl-[acyl-carrier protein] and L-alanine to produce 8-amino-7-oxononanoate (AON), [acyl-carrier protein], and carbon dioxide. The chain is Putative 8-amino-7-oxononanoate synthase (bioF) from Methanocaldococcus jannaschii (strain ATCC 43067 / DSM 2661 / JAL-1 / JCM 10045 / NBRC 100440) (Methanococcus jannaschii).